The following is a 456-amino-acid chain: Bifunctional protein GlmU (456 aa).

The segment at 1-229 (MLNSAMSVVI…ISETDGVNNR (229 aa)) is pyrophosphorylase. Residues 11 to 14 (LAAG), Lys25, Gln76, 81 to 82 (GT), 103 to 105 (YGD), Gly140, Glu154, Asn169, and Asn227 contribute to the UDP-N-acetyl-alpha-D-glucosamine site. A Mg(2+)-binding site is contributed by Asp105. Residue Asn227 coordinates Mg(2+). The tract at residues 230–250 (LQLSRLERIYQAEQAEKLLLS) is linker. An N-acetyltransferase region spans residues 251-456 (GVMLRDPARF…QGWQRPVKKK (206 aa)). UDP-N-acetyl-alpha-D-glucosamine is bound by residues Arg333 and Lys351. His363 functions as the Proton acceptor in the catalytic mechanism. 2 residues coordinate UDP-N-acetyl-alpha-D-glucosamine: Tyr366 and Asn377. Residues Ala380, 386–387 (NY), Ser405, Ala423, and Arg440 contribute to the acetyl-CoA site.

In the N-terminal section; belongs to the N-acetylglucosamine-1-phosphate uridyltransferase family. It in the C-terminal section; belongs to the transferase hexapeptide repeat family. As to quaternary structure, homotrimer. Mg(2+) serves as cofactor.

Its subcellular location is the cytoplasm. The enzyme catalyses alpha-D-glucosamine 1-phosphate + acetyl-CoA = N-acetyl-alpha-D-glucosamine 1-phosphate + CoA + H(+). It carries out the reaction N-acetyl-alpha-D-glucosamine 1-phosphate + UTP + H(+) = UDP-N-acetyl-alpha-D-glucosamine + diphosphate. The protein operates within nucleotide-sugar biosynthesis; UDP-N-acetyl-alpha-D-glucosamine biosynthesis; N-acetyl-alpha-D-glucosamine 1-phosphate from alpha-D-glucosamine 6-phosphate (route II): step 2/2. It functions in the pathway nucleotide-sugar biosynthesis; UDP-N-acetyl-alpha-D-glucosamine biosynthesis; UDP-N-acetyl-alpha-D-glucosamine from N-acetyl-alpha-D-glucosamine 1-phosphate: step 1/1. Its pathway is bacterial outer membrane biogenesis; LPS lipid A biosynthesis. Functionally, catalyzes the last two sequential reactions in the de novo biosynthetic pathway for UDP-N-acetylglucosamine (UDP-GlcNAc). The C-terminal domain catalyzes the transfer of acetyl group from acetyl coenzyme A to glucosamine-1-phosphate (GlcN-1-P) to produce N-acetylglucosamine-1-phosphate (GlcNAc-1-P), which is converted into UDP-GlcNAc by the transfer of uridine 5-monophosphate (from uridine 5-triphosphate), a reaction catalyzed by the N-terminal domain. The sequence is that of Bifunctional protein GlmU from Salmonella typhi.